Here is a 306-residue protein sequence, read N- to C-terminus: MASSSCLWLLALAFLLGSCASLALGHLDPPAPLPLVIWHGMGDSCCNPLSMGAIKKMVEKKIPGIHVLSLEIGKTLREDVENSFFLNVNSQVTTVCQILAKDPKLQQGYNAMGFSQGGQFLRAVAQRCPSPPMVNLISVGGQHQGVFGLPRCPGESSHICDFIRKTLNAGAYNKAIQERLVQAEYWHDPIREDIYRNHSIFLADINQERGVNESYKKNLMALKKFVMVKFLNDTIVDPVDSEWFGFYRSGQAKETIPLQESTLYTQDRLGLKAMDKAGQLVFLALEGDHLQLSEEWFYAHIIPFLE.

The signal sequence occupies residues 1-27; that stretch reads MASSSCLWLLALAFLLGSCASLALGHL. Cystine bridges form between cysteine 45/cysteine 46, cysteine 96/cysteine 128, and cysteine 152/cysteine 160. The active site involves serine 115. Residues asparagine 197, asparagine 212, and asparagine 232 are each glycosylated (N-linked (GlcNAc...) asparagine). Catalysis depends on residues aspartate 233 and histidine 289.

The protein belongs to the palmitoyl-protein thioesterase family. As to quaternary structure, interacts with CLN5, ATP5F1A and ATP5F1B. In terms of processing, glycosylated. As to expression, spleen, brain, seminal vesicle, and testis. Lower levels of activity in liver, heart, lung, and skeletal muscle.

The protein resides in the lysosome. The protein localises to the secreted. Its subcellular location is the golgi apparatus. It localises to the endoplasmic reticulum. It carries out the reaction S-hexadecanoyl-L-cysteinyl-[protein] + H2O = L-cysteinyl-[protein] + hexadecanoate + H(+). The enzyme catalyses hexadecanoyl-CoA + H2O = hexadecanoate + CoA + H(+). It catalyses the reaction S-hexadecanoyl-N-acetylcysteamine + H2O = N-acetylcysteamine + hexadecanoate + H(+). The catalysed reaction is S-hexadecanoyl-N-acetylcysteine methyl ester + H2O = N-acetylcysteine methyl ester + hexadecanoate + H(+). Its activity is regulated as follows. Palmitoylation reduces PPT1 enzymatic activity. In terms of biological role, has thioesterase activity against fatty acid thioesters with 14 -18 carbons, including palmitoyl-CoA, S-palmitoyl-N-acetylcysteamine, and palmitoylated proteins. In contrast to PPT2, PPT1 can hydrolyze palmitoylated proteins and palmitoylcysteine. The polypeptide is Palmitoyl-protein thioesterase 1 (PPT1) (Bos taurus (Bovine)).